We begin with the raw amino-acid sequence, 174 residues long: Putative NADH dehydrogenase/NAD(P)H nitroreductase AF_2267 (174 aa).

Position 107–112 (107–112 (AARCLG)) interacts with NAD(+).

Belongs to the nitroreductase family. Requires FMN as cofactor.

This chain is Putative NADH dehydrogenase/NAD(P)H nitroreductase AF_2267, found in Archaeoglobus fulgidus (strain ATCC 49558 / DSM 4304 / JCM 9628 / NBRC 100126 / VC-16).